The primary structure comprises 500 residues: Glycerol kinase (500 aa).

An ADP-binding site is contributed by Thr-13. The ATP site is built by Thr-13, Thr-14, and Ser-15. Thr-13 contributes to the sn-glycerol 3-phosphate binding site. Arg-17 is a binding site for ADP. The sn-glycerol 3-phosphate site is built by Arg-83, Glu-84, Tyr-135, and Asp-244. Residues Arg-83, Glu-84, Tyr-135, Asp-244, and Gln-245 each contribute to the glycerol site. ADP is bound by residues Thr-266, Gly-309, Gly-410, and Asn-414. ATP contacts are provided by Thr-266, Gly-309, and Gly-410.

This sequence belongs to the FGGY kinase family.

It catalyses the reaction glycerol + ATP = sn-glycerol 3-phosphate + ADP + H(+). Its pathway is polyol metabolism; glycerol degradation via glycerol kinase pathway; sn-glycerol 3-phosphate from glycerol: step 1/1. Inhibited by fructose 1,6-bisphosphate (FBP). Key enzyme in the regulation of glycerol uptake and metabolism. Catalyzes the phosphorylation of glycerol to yield sn-glycerol 3-phosphate. In Chromobacterium violaceum (strain ATCC 12472 / DSM 30191 / JCM 1249 / CCUG 213 / NBRC 12614 / NCIMB 9131 / NCTC 9757 / MK), this protein is Glycerol kinase.